A 1016-amino-acid chain; its full sequence is Probably inactive leucine-rich repeat receptor-like protein kinase At3g28040 (1016 aa).

The first 26 residues, 1–26 (MGKQRRTMISFTLFLTLTMMSSLING), serve as a signal peptide directing secretion. The Extracellular segment spans residues 27-646 (DTDSIQLNDD…FHRRMFLSVS (620 aa)). 20 LRR repeats span residues 102–124 (RLKVLSLSNNNFTGNINALSNNN), 125–147 (HLQKLDLSHNNLSGQIPSSLGSI), 149–171 (SLQHLDLTGNSFSGTLSDDLFNN), 174–196 (SLRYLSLSHNHLEGQIPSTLFRC), 198–219 (VLNSLNLSRNRFSGNPSFVSGI), 224–245 (RLRALDLSSNSLSGSIPLGILS), 248–270 (NLKELQLQRNQFSGALPSDIGLC), 272–295 (HLNRVDLSSNHFSGELPRTLQKLK), 296–318 (SLNHFDVSNNLLSGDFPPWIGDM), 320–342 (GLVHLDFSSNELTGKLPSSISNL), 344–366 (SLKDLNLSENKLSGEVPESLESC), 368–390 (ELMIVQLKGNDFSGNIPDGFFDL), 391–413 (GLQEMDFSGNGLTGSIPRGSSRL), 416–438 (SLIRLDLSHNSLTGSIPGEVGLF), 440–462 (HMRYLNLSWNHFNTRVPPEIEFL), 464–486 (NLTVLDLRNSALIGSVPADICES), 488–510 (SLQILQLDGNSLTGSIPEGIGNC), 512–535 (SLKLLSLSHNNLTGPIPKSLSNLQ), 536–559 (ELKILKLEANKLSGEIPKELGDLQ), and 560–582 (NLLLVNVSFNRLIGRLPLGDVFQ). N-linked (GlcNAc...) asparagine glycans are attached at residues asparagine 112, asparagine 135, and asparagine 171. An N-linked (GlcNAc...) asparagine glycan is attached at asparagine 203. Asparagine 349 is a glycosylation site (N-linked (GlcNAc...) asparagine). Asparagine 445, asparagine 464, asparagine 509, and asparagine 522 each carry an N-linked (GlcNAc...) asparagine glycan. Asparagine 565 carries an N-linked (GlcNAc...) asparagine glycan. Residues 647–667 (VIVAISAAILIFSGVIIITLL) traverse the membrane as a helical segment. Topologically, residues 668 to 1016 (NASVRRRLAF…PVPHRIMDSF (349 aa)) are cytoplasmic. A Protein kinase domain is found at 726-1013 (LNKASRIGEG…INSPVPHRIM (288 aa)). ATP is bound by residues 732-740 (IGEGVFGTV) and lysine 755. Phosphotyrosine occurs at positions 841 and 898.

Belongs to the protein kinase superfamily. Ser/Thr protein kinase family.

It is found in the membrane. The chain is Probably inactive leucine-rich repeat receptor-like protein kinase At3g28040 from Arabidopsis thaliana (Mouse-ear cress).